The primary structure comprises 157 residues: MAAGDFRLCDVVLDDTIGRSTPDVEHERAVAIFDLIEENSFAPIGHAGGPYRLNISLVDSKLVFAIRTEEGIDVATHILSLTPFRRIVKDYFMICESYYEAIRSATPSRIEAIDMGRRGIHNEGSQTLKDRLTGKIEVDFDTARRLFTLVCVLYWRG.

Belongs to the UPF0262 family.

This chain is UPF0262 protein Rleg2_0240, found in Rhizobium leguminosarum bv. trifolii (strain WSM2304).